The primary structure comprises 282 residues: 2-dehydro-3-deoxyphosphooctonate aldolase (282 aa).

Belongs to the KdsA family.

It is found in the cytoplasm. The catalysed reaction is D-arabinose 5-phosphate + phosphoenolpyruvate + H2O = 3-deoxy-alpha-D-manno-2-octulosonate-8-phosphate + phosphate. It functions in the pathway carbohydrate biosynthesis; 3-deoxy-D-manno-octulosonate biosynthesis; 3-deoxy-D-manno-octulosonate from D-ribulose 5-phosphate: step 2/3. It participates in bacterial outer membrane biogenesis; lipopolysaccharide biosynthesis. This Bradyrhizobium diazoefficiens (strain JCM 10833 / BCRC 13528 / IAM 13628 / NBRC 14792 / USDA 110) protein is 2-dehydro-3-deoxyphosphooctonate aldolase.